A 118-amino-acid chain; its full sequence is M-zodatoxin-Lt8p (118 aa).

Positions 1–3 (AES) are cleaved as a signal peptide. The propeptide occupies 4–43 (KPAESEHELAEVEEENELADLEDAVWLEHLADLSDLEEAR).

This sequence belongs to the cationic peptide 06 (cytoinsectotoxin) family. Expressed by the venom gland.

It is found in the secreted. In terms of biological role, insecticidal, cytolytic and antimicrobial peptide. Forms voltage-dependent, ion-permeable channels in membranes. At high concentration causes cell membrane lysis. The chain is M-zodatoxin-Lt8p (cit 1-15) from Lachesana tarabaevi (Spider).